A 463-amino-acid polypeptide reads, in one-letter code: Argininosuccinate lyase (463 aa).

The protein belongs to the lyase 1 family. Argininosuccinate lyase subfamily.

Its subcellular location is the cytoplasm. The enzyme catalyses 2-(N(omega)-L-arginino)succinate = fumarate + L-arginine. It functions in the pathway amino-acid biosynthesis; L-arginine biosynthesis; L-arginine from L-ornithine and carbamoyl phosphate: step 3/3. The polypeptide is Argininosuccinate lyase (Methylorubrum populi (strain ATCC BAA-705 / NCIMB 13946 / BJ001) (Methylobacterium populi)).